Reading from the N-terminus, the 61-residue chain is Large ribosomal subunit protein uL30 (61 aa).

It belongs to the universal ribosomal protein uL30 family. As to quaternary structure, part of the 50S ribosomal subunit.

The sequence is that of Large ribosomal subunit protein uL30 from Bordetella parapertussis (strain 12822 / ATCC BAA-587 / NCTC 13253).